We begin with the raw amino-acid sequence, 37 residues long: Large ribosomal subunit protein bL36 (37 aa).

This sequence belongs to the bacterial ribosomal protein bL36 family.

This Clostridium kluyveri (strain NBRC 12016) protein is Large ribosomal subunit protein bL36.